We begin with the raw amino-acid sequence, 143 residues long: Fluoride-specific ion channel FluC (143 aa).

Helical transmembrane passes span 3–23 (AVVW…GSGL), 41–61 (WGTL…LIWL), 76–96 (IVGL…CLVF), and 103–123 (LMVG…VFLG). 2 residues coordinate Na(+): Gly-81 and Thr-84.

Belongs to the fluoride channel Fluc/FEX (TC 1.A.43) family.

The protein resides in the cell inner membrane. It carries out the reaction fluoride(in) = fluoride(out). With respect to regulation, na(+) is not transported, but it plays an essential structural role and its presence is essential for fluoride channel function. Functionally, fluoride-specific ion channel. Important for reducing fluoride concentration in the cell, thus reducing its toxicity. The sequence is that of Fluoride-specific ion channel FluC from Xylella fastidiosa (strain 9a5c).